The sequence spans 286 residues: Pyridoxal kinase PdxY (286 aa).

Substrate-binding positions include serine 9 and 44–45 (TQ). The ATP site is built by aspartate 111, glutamate 148, and lysine 181. Aspartate 222 is a binding site for substrate.

It belongs to the pyridoxine kinase family. PdxY subfamily. Homodimer. Mg(2+) serves as cofactor.

The enzyme catalyses pyridoxal + ATP = pyridoxal 5'-phosphate + ADP + H(+). The protein operates within cofactor metabolism; pyridoxal 5'-phosphate salvage; pyridoxal 5'-phosphate from pyridoxal: step 1/1. Functionally, pyridoxal kinase involved in the salvage pathway of pyridoxal 5'-phosphate (PLP). Catalyzes the phosphorylation of pyridoxal to PLP. In Actinobacillus pleuropneumoniae serotype 5b (strain L20), this protein is Pyridoxal kinase PdxY.